The primary structure comprises 747 residues: Internal virion protein gp15 (747 aa).

The protein belongs to the T7virus internal virion protein gp15 family. Homooctamer. Interacts with gp16; after ejection the gp15-gp16 complex composed of a gp15 octamer and a gp16 tetramer probably binds both the viral DNA and the host inner membrane. Interacts with gp14.

Its subcellular location is the virion. The protein localises to the host periplasm. Component of the cylindrical core that assembles on the inner surface of the capsid during capsid formation and plays a role in viral DNA ejection into the host cell. The inner core is composed of stacked rings of gp14, gp15 and gp16 proteins. Following binding to the host cell surface, the internal core is disassembled and gp15 is ejected along with gp14 and gp16 into the infected cell. Gp15 probably remains associated with gp16. The gp15-gp16 complex binds to both the viral DNA and the host inner membrane, probably escorting the leading end of the genome through the periplasm and controlling the extend of DNA translocated into the host cell. The chain is Internal virion protein gp15 from Escherichia phage T7 (Bacteriophage T7).